A 176-amino-acid polypeptide reads, in one-letter code: Endoribonuclease YbeY (176 aa).

Zn(2+) contacts are provided by histidine 139, histidine 143, and histidine 149.

Belongs to the endoribonuclease YbeY family. The cofactor is Zn(2+).

It is found in the cytoplasm. Its function is as follows. Single strand-specific metallo-endoribonuclease involved in late-stage 70S ribosome quality control and in maturation of the 3' terminus of the 16S rRNA. This Acaryochloris marina (strain MBIC 11017) protein is Endoribonuclease YbeY.